The primary structure comprises 275 residues: Large ribosomal subunit protein uL2 (275 aa).

Disordered stretches follow at residues 38-59 and 223-275; these read TRGS…GGHK and VAMN…RKRK. A compositionally biased stretch (basic residues) spans 50-59; sequence TVRHRGGGHK. Over residues 229–244 the composition is skewed to basic and acidic residues; it reads DHPHGGGEGRTGEARE.

Belongs to the universal ribosomal protein uL2 family. Part of the 50S ribosomal subunit. Forms a bridge to the 30S subunit in the 70S ribosome.

One of the primary rRNA binding proteins. Required for association of the 30S and 50S subunits to form the 70S ribosome, for tRNA binding and peptide bond formation. It has been suggested to have peptidyltransferase activity; this is somewhat controversial. Makes several contacts with the 16S rRNA in the 70S ribosome. The chain is Large ribosomal subunit protein uL2 from Bordetella bronchiseptica (strain ATCC BAA-588 / NCTC 13252 / RB50) (Alcaligenes bronchisepticus).